Consider the following 717-residue polypeptide: Glycine--tRNA ligase beta subunit (717 aa).

Belongs to the class-II aminoacyl-tRNA synthetase family. In terms of assembly, tetramer of two alpha and two beta subunits.

It is found in the cytoplasm. The catalysed reaction is tRNA(Gly) + glycine + ATP = glycyl-tRNA(Gly) + AMP + diphosphate. This is Glycine--tRNA ligase beta subunit from Agrobacterium fabrum (strain C58 / ATCC 33970) (Agrobacterium tumefaciens (strain C58)).